The sequence spans 204 residues: bMERB domain-containing protein 1 (204 aa).

The bMERB domain occupies Leu-3–Asp-150. The interval Val-162–Thr-187 is disordered.

The chain is bMERB domain-containing protein 1 (BMERB1) from Pongo abelii (Sumatran orangutan).